A 383-amino-acid polypeptide reads, in one-letter code: Ribosomal RNA large subunit methyltransferase G (383 aa).

This sequence belongs to the methyltransferase superfamily. RlmG family.

It localises to the cytoplasm. The catalysed reaction is guanosine(1835) in 23S rRNA + S-adenosyl-L-methionine = N(2)-methylguanosine(1835) in 23S rRNA + S-adenosyl-L-homocysteine + H(+). Specifically methylates the guanine in position 1835 (m2G1835) of 23S rRNA. This chain is Ribosomal RNA large subunit methyltransferase G, found in Vibrio atlanticus (strain LGP32) (Vibrio splendidus (strain Mel32)).